Reading from the N-terminus, the 274-residue chain is MKKVVKLNNIKIGNDLQFVLIAGPCQIEDEDHALFMAEKLIQLTSKLSIPFIYKSSFDKANRTSINGIRGLGIEKGLEILSKVKSEFNCPIITDVHSESQCTDTAKVVDILQIPAFLCRQTDLLKAAAKTGKIVKVKKGQFLAPWDMKNVQTKLEAFGAKDILFTERGSCFGYNNLISDMRSLAIMSELNVPVVFDATHSVQQPGGRGGSSGGERKYVELLAKAAISVGIAGIYMEVHQDPDNAPSDGPCMIKLDHLESILIKLKKYDKITKEE.

This sequence belongs to the KdsA family.

The protein localises to the cytoplasm. The enzyme catalyses D-arabinose 5-phosphate + phosphoenolpyruvate + H2O = 3-deoxy-alpha-D-manno-2-octulosonate-8-phosphate + phosphate. It functions in the pathway carbohydrate biosynthesis; 3-deoxy-D-manno-octulosonate biosynthesis; 3-deoxy-D-manno-octulosonate from D-ribulose 5-phosphate: step 2/3. It participates in bacterial outer membrane biogenesis; lipopolysaccharide biosynthesis. The sequence is that of 2-dehydro-3-deoxyphosphooctonate aldolase from Rickettsia typhi (strain ATCC VR-144 / Wilmington).